We begin with the raw amino-acid sequence, 421 residues long: Testin (421 aa).

Residues 92-199 (MILTNPVAAK…GDVKLPREMD (108 aa)) form the PET domain. The segment at 133–164 (EKQPVAGSEGAQYRKKQLAKQLPAHDQDPSKC) is disordered. A compositionally biased stretch (basic and acidic residues) spans 155–164 (PAHDQDPSKC). 3 consecutive LIM zinc-binding domains span residues 234 to 297 (YSCY…CDSE), 299 to 359 (PRCA…NHAV), and 362 to 421 (QGCH…KMMS).

It belongs to the prickle / espinas / testin family. As to quaternary structure, interacts via LIM domain 1 with ZYX. Interacts (via LIM domain 3) with ENAH and VASP. Interacts with ALKBH4, talin, actin, alpha-actinin, GRIP1 and PXN. Interacts (via LIM domain 2) with ACTL7A (via N-terminus). Heterodimer with ACTL7A; the heterodimer interacts with ENAH to form a heterotrimer.

The protein resides in the cytoplasm. The protein localises to the cell junction. It is found in the focal adhesion. Its function is as follows. Scaffold protein that may play a role in cell adhesion, cell spreading and in the reorganization of the actin cytoskeleton. Plays a role in the regulation of cell proliferation. May act as a tumor suppressor. The protein is Testin (TES) of Neofelis nebulosa (Clouded leopard).